Reading from the N-terminus, the 297-residue chain is Calponin-1 (297 aa).

A Calponin-homology (CH) domain is found at 28–131 (HQREQELREW…STLLALASMA (104 aa)). Calponin-like repeat units lie at residues 164-189 (IGLQ…RHLY), 204-229 (ISLQ…RQIF), and 243-268 (VSLQ…RQVY). Thr-170 bears the Phosphothreonine; by ROCK2 mark. Position 175 is a phosphoserine; by ROCK2 (Ser-175). Phosphothreonine; by ROCK2 is present on residues Thr-180 and Thr-184. At Thr-259 the chain carries Phosphothreonine; by ROCK2.

The protein belongs to the calponin family. As to quaternary structure, part of cGMP kinase signaling complex at least composed of ACTA2/alpha-actin, CNN1/calponin H1, PLN/phospholamban, PRKG1 and ITPR1. In terms of tissue distribution, smooth muscle, and tissues containing significant amounts of smooth muscle.

In terms of biological role, thin filament-associated protein that is implicated in the regulation and modulation of smooth muscle contraction. It is capable of binding to actin, calmodulin and tropomyosin. The interaction of calponin with actin inhibits the actomyosin Mg-ATPase activity. The chain is Calponin-1 (CNN1) from Homo sapiens (Human).